The chain runs to 280 residues: uncharacterized protein (280 aa).

Helical transmembrane passes span 3–23 (ILITALEQSLIMLPLILGMYI), 52–72 (FGLFHALIFAIIAGGINGSIV), 81–101 (INGLIAGILANFMLYSVNLQI), 123–143 (NWLVPLILINSFIIVIVLILL), 196–216 (FADINMGYGVALVGIGAIIIG), and 233–253 (IFACFIGILFYFISLSILLHI).

The protein localises to the cell membrane. This is an uncharacterized protein from Rickettsia prowazekii (strain Madrid E).